The chain runs to 551 residues: uncharacterized protein (551 aa).

The N-terminal 36 residues, 1–36 (MMALVRDRRAHYVMSIVIRWVHCFSSSLRGTFGTRW), are a transit peptide targeting the mitochondrion. Residues 203–315 (TNILLRKLKE…MDSRDRLREE (113 aa)) are a coiled coil. The interval 354–389 (REASLSPWPKSPPSTTALRPHSATMSVSSAGAQKAK) is disordered. Residues 366–384 (PSTTALRPHSATMSVSSAG) show a composition bias toward polar residues. Positions 405-439 (KHGLESQIEALKANLENEKKKVERFRKEADRLNKS) form a coiled coil. Positions 519–551 (LQLSPKGKLSESPKEESLEEPSMRQSSPAETVD) are disordered. The segment covering 541-551 (MRQSSPAETVD) has biased composition (polar residues).

Interacts with NOD2.

The protein localises to the mitochondrion. This is an uncharacterized protein from Homo sapiens (Human).